We begin with the raw amino-acid sequence, 172 residues long: Translationally-controlled tumor protein homolog (172 aa).

The region spanning 1–172 is the TCTP domain; it reads MIIYRDCISQ…FKDGLEMEKC (172 aa).

It belongs to the TCTP family. Expressed by the venom gland.

It is found in the secreted. Its function is as follows. Venom protein that causes edema, enhances vascular permeability and is likely related to the inflammatory activity of the venom. The sequence is that of Translationally-controlled tumor protein homolog from Crotalus adamanteus (Eastern diamondback rattlesnake).